Here is a 307-residue protein sequence, read N- to C-terminus: Oxygen-dependent coproporphyrinogen-III oxidase (307 aa).

S99 serves as a coordination point for substrate. The a divalent metal cation site is built by H103 and H113. The active-site Proton donor is H113. Position 115 to 117 (115 to 117 (NVR)) interacts with substrate. H152 and H182 together coordinate a divalent metal cation. The tract at residues 247–282 (YVEFNLVFDRGTLFGLQSGGRTESILMSMPPVANWR) is important for dimerization. Position 265–267 (265–267 (GGR)) interacts with substrate.

The protein belongs to the aerobic coproporphyrinogen-III oxidase family. As to quaternary structure, homodimer. It depends on a divalent metal cation as a cofactor.

The protein resides in the cytoplasm. It catalyses the reaction coproporphyrinogen III + O2 + 2 H(+) = protoporphyrinogen IX + 2 CO2 + 2 H2O. The protein operates within porphyrin-containing compound metabolism; protoporphyrin-IX biosynthesis; protoporphyrinogen-IX from coproporphyrinogen-III (O2 route): step 1/1. Involved in the heme biosynthesis. Catalyzes the aerobic oxidative decarboxylation of propionate groups of rings A and B of coproporphyrinogen-III to yield the vinyl groups in protoporphyrinogen-IX. In Burkholderia multivorans (strain ATCC 17616 / 249), this protein is Oxygen-dependent coproporphyrinogen-III oxidase.